Consider the following 1133-residue polypeptide: MAYPELDAADFLQQLARRKEFKSLISPPVDQKELIRDLRAHFVQIGGPGCEKGGRAFFPCDPYASPFPSIKGLQLHNAQLFVQNFQNPNTPYSRLLLNWQTGTGKSIAAIAIARQFMNHYMNFIENAPWIFVVGFTRAIIQTEMLRRPELGFVSYKEVAELHRLLHIAKQSGSTTSVESRHLNGFVSTLKRRLTDRNRGGFFQFYGYKEFASKLFNITSKGEEKNFDVLSLFHRSDEAEDTLNENDISQFVQKISEAETNGLIRVNQKIMEQLRGGLLIADEIHNVYNIQERNNYGIALQYVLDAFPPHQAPRAVFMSATPVTGSVMEYVDLLNLLVPRHELPNGQPLQRQQLFDSSGHSVKWKKDALALVERLSTGRVSFLLDTNTNFYPERIFAGKMLSYKDEKLPYLHFIECPMSEYQLETLKQLGPDPKISSNAYSIYDMVFPNPKFSKQTEPKAYGLFNSTETPTALSMASTDWLLENGVQIIEPSRRAPFNVSGSFLSLQPPTHISGLAFYSGKYTQMMKDILSIIRQGRGKILIYHNRVRMSGVLILQEILQSNGILNEVSSPVGTTRCSICAAIRDDHTHSDHQFIPVRFTILHSEIEPAVRERSLALFNASSNLEGHQLRILIGSKVIVEGLNFQAVRYEMIMSLPLDIPRLIQVFGRVVRKNSHMELPPSERNVTIYLYVSTTPDGGPELAKYAQKLKEYILIQEGDKALRKHAIDGFTNQIKIDKPMLESLPLSPSITPANVGATVLNTFEAYGYGEQEVKTISNIIISLFMARPVWTYSELWKAVSTPKLIQGITIDNKLFSEDNFALALISLCYSKNQCKELWIQNRLCTIMHVPAKPEHLYVAAVLNHKKEPVLDIETYIRDFQPPTMHSIRITKYLEHSQTKEPFQVLYEKFQKDFQDEPMEQVLIHYPASFHYTMLEALIIDNLAGMGALVEVYKKFFIAFSKKDIQPFPDIFKIISHVPGDDNTLVGYATEDSVRLITSREDKTWHEIPLYMLNINVKRKENDIVIGYMESKGKALKFKIRPPIQVLKKNEITDIRMLNRGAVCETRGREEQQKIANQLGISLNLTKISAIKLCLLIRNNLLQKEMEARNQPNGMQDGIRWFYLFNDKMPSLVHTS.

A Helicase ATP-binding domain is found at K52–Q352. ATP is bound at residue W99–S106. The DEAH box motif lies at D281–H284. The 201-residue stretch at M524 to A724 folds into the Helicase C-terminal domain.

This sequence belongs to the DEAD box helicase family. DEAH subfamily.

The protein resides in the virion. The enzyme catalyses ATP + H2O = ADP + phosphate + H(+). Functionally, putative initation factor. The sequence is that of Early transcription factor large subunit homolog from African swine fever virus (isolate Tick/South Africa/Pretoriuskop Pr4/1996) (ASFV).